A 541-amino-acid polypeptide reads, in one-letter code: Thioredoxin reductase (541 aa).

FAD contacts are provided by residues 51–52 (PG), 71–74 (DYVK), 87–88 (TC), 92–96 (GCVPK), Ala-161, Asp-357, and 364–366 (ELA). Cys-88 and Cys-93 are oxidised to a cystine. A loop important for the interaction with TRX1 region spans residues 438 to 452 (HRQKHIRAQKDEYDL). An FAD-binding site is contributed by His-509. The Proton acceptor role is filled by His-509. Cys-535 and Cys-540 are oxidised to a cystine.

The protein belongs to the class-I pyridine nucleotide-disulfide oxidoreductase family. In terms of assembly, homodimer. It depends on FAD as a cofactor.

Its subcellular location is the cytoplasm. The catalysed reaction is [thioredoxin]-dithiol + NADP(+) = [thioredoxin]-disulfide + NADPH + H(+). Functionally, catalyzes the transfer of electrons from NADPH to thioredoxins TRX1, TRX2 and TRX3, which in turn act as reductants of disulfide containing proteins. Able to reduce nitroglutathione (GSNO), a compound involved in the transport of nitric oxide (NO); however, TRX1 is more efficient in reducing GSNO. Has no catalytic activity towards oxidized glutathione (GSSG). The chain is Thioredoxin reductase from Plasmodium falciparum (isolate FCH-5).